A 433-amino-acid chain; its full sequence is ATP-dependent protease ATPase subunit HslU (433 aa).

ATP-binding positions include valine 18, 60 to 65 (GVGKTE), aspartate 246, glutamate 311, and arginine 383.

This sequence belongs to the ClpX chaperone family. HslU subfamily. As to quaternary structure, a double ring-shaped homohexamer of HslV is capped on each side by a ring-shaped HslU homohexamer. The assembly of the HslU/HslV complex is dependent on binding of ATP.

The protein localises to the cytoplasm. Its function is as follows. ATPase subunit of a proteasome-like degradation complex; this subunit has chaperone activity. The binding of ATP and its subsequent hydrolysis by HslU are essential for unfolding of protein substrates subsequently hydrolyzed by HslV. HslU recognizes the N-terminal part of its protein substrates and unfolds these before they are guided to HslV for hydrolysis. The sequence is that of ATP-dependent protease ATPase subunit HslU from Rhodopseudomonas palustris (strain TIE-1).